A 466-amino-acid chain; its full sequence is Ribosomal protein uS12 methylthiotransferase RimO (466 aa).

The region spanning 15–125 is the MTTase N-terminal domain; it reads PKVGFVSLGC…VMEAVHAALP (111 aa). Positions 24, 60, 89, 156, 160, and 163 each coordinate [4Fe-4S] cluster. One can recognise a Radical SAM core domain in the interval 142 to 380; it reads LTPRHYAYLK…AKQAEISALR (239 aa). The 69-residue stretch at 382–450 folds into the TRAM domain; that stretch reads EAKIGSVQQC…EHDLFGDALP (69 aa).

Belongs to the methylthiotransferase family. RimO subfamily. [4Fe-4S] cluster is required as a cofactor.

The protein localises to the cytoplasm. It carries out the reaction L-aspartate(89)-[ribosomal protein uS12]-hydrogen + (sulfur carrier)-SH + AH2 + 2 S-adenosyl-L-methionine = 3-methylsulfanyl-L-aspartate(89)-[ribosomal protein uS12]-hydrogen + (sulfur carrier)-H + 5'-deoxyadenosine + L-methionine + A + S-adenosyl-L-homocysteine + 2 H(+). Functionally, catalyzes the methylthiolation of an aspartic acid residue of ribosomal protein uS12. In Xanthomonas oryzae pv. oryzae (strain MAFF 311018), this protein is Ribosomal protein uS12 methylthiotransferase RimO.